Consider the following 74-residue polypeptide: Mucroporin (74 aa).

The first 22 residues, 1–22 (MKVKFLLAVFLIVLVVTDHCHA), serve as a signal peptide directing secretion. Lysine amide is present on Lys-39. The propeptide occupies 45 to 74 (QMEARFEPQNRNYRKRELDLEKLFANMPDY).

Belongs to the non-disulfide-bridged peptide (NDBP) superfamily. Short antimicrobial peptide (group 4) family. Expressed by the venom gland.

It localises to the secreted. The protein localises to the target cell membrane. Mucroporin: cationic host defense peptide that have antibacterial activity by breaking membranes. Is more effective on Gram-positive than on Gram-negative bacteria. Minimum inhibitory concentrations (MIC) are the following: MIC=&gt;100 ug/ml against E.coli AB94012, MIC=&gt;100 ug/ml against P.aeruginosa AB93066, MIC=25 ug/ml against B.thuringiensis AB92037, MIC=50 ug/ml against B.subtilis AB91021, MIC=25 ug/ml against S.aureus AB94004, and MIC=25 ug/ml against the methicillin-resistant coagulase-negative Staphylococcus. Its synthetic analog mucroporin-M1 is more effective. Does not show antiviral activity against any of measles, SARS-CoV, influenza H5N1, hepatitis B and HIV-1 viruses. In terms of biological role, mutant mucroporin-M1: can inhibit Gram-positive bacteria at low concentrations and antibiotic-resistant pathogens. Minimum inhibitory concentrations (MIC) are the following: MIC=12.5 ug/ml against E.coli AB94012, MIC=100 ug/ml against P.aeruginosa AB93066, MIC=25 ug/ml against B.thuringiensis AB92037, MIC=25 ug/ml against B.subtilis AB91021, MIC=5 ug/ml against S.aureus AB94004, and MIC=5 ug/ml against the methicillin-resistant coagulase-negative Staphylococcus. Also shows antiviral activities against measles (EC(50) of 7.15 ug/ml), SARS-CoV (EC(50) of 14.46 ug/ml), influenza H5N1 viruses (EC(50) of 2.10 mug/ml), HIV-1, and hepatitis B virus. This is Mucroporin from Lychas mucronatus (Chinese swimming scorpion).